The primary structure comprises 142 residues: Dynein light chain Tctex-type protein 2B (142 aa).

This sequence belongs to the dynein light chain Tctex-type family. Light chain of the cytoplasmic dynein complex 2, a multisubunit complex composed at least of eleven different proteins. The cytoplasmic dynein 2 complex consists of two catalytic heavy chains (HCs) and a number of non-catalytic subunits presented by intermediate chains (ICs), light intermediate chains (LICs) and light chains (LCs). Among them, a heavy chain (DYNC2H1), two intermediate chains (DYNC2I2 and DYNC2I1), a light intermediate chain (DYNC2LI1), and a light chain (DYNLT2B) are unique to the dynein-2 complex, but a subset of the light chains are also shared by dynein-1 and dynein-2 complexes. Interacts with DYNC2I1. The dimer DYNLT2B-DYNLT1/DYNLT3 interacts with DYNC2I1; this interaction is crucial for retrograde trafficking of ciliary proteins.

Its subcellular location is the dynein axonemal particle. Its function is as follows. Acts as one of several non-catalytic accessory components of the cytoplasmic dynein 2 complex (dynein-2 complex), a motor protein complex that drives the movement of cargos along microtubules within cilia and flagella in concert with the intraflagellar transport (IFT) system. Required for proper retrograde ciliary transport. The protein is Dynein light chain Tctex-type protein 2B of Homo sapiens (Human).